We begin with the raw amino-acid sequence, 352 residues long: Phosphatase Herzog (352 aa).

A prion-like domain necessary for both protein assembly and membrane targeting region spans residues 1–102; sequence MDATSIITQV…PLPDQQRYLL (102 aa). The segment at 103 to 267 is mediates substrate recognition; sequence PQVRLTDMHR…ELIPLFEKLS (165 aa). The FCP1 homology domain occupies 108–266; the sequence is TDMHRKCMVI…RELIPLFEKL (159 aa). Disordered stretches follow at residues 284-310 and 332-352; these read NNQTNQQQHPQELQQAPNQLHQQLQQQ and TMLNQQQTSPPSPQSELLQKT.

Monomer. Forms higher-order protein aggregates with amyloid-like features during gastrulation. Interacts with babo, dah, Irk1, pch2, Ras64B, sax and Src64B.

The protein resides in the cell membrane. The enzyme catalyses O-phospho-L-seryl-[protein] + H2O = L-seryl-[protein] + phosphate. With respect to regulation, phosphatase activity requires amyloid-like aggregation on the membrane. Functionally, prion-like membrane-associated phosphatase. Phosphatase activity depends on amyloid-like assembly at the membrane. Might have a role in establishment of segment polarity in embryos. The polypeptide is Phosphatase Herzog (Drosophila melanogaster (Fruit fly)).